The primary structure comprises 84 residues: Large ribosomal subunit protein eL34 (84 aa).

Belongs to the eukaryotic ribosomal protein eL34 family.

This Pyrobaculum aerophilum (strain ATCC 51768 / DSM 7523 / JCM 9630 / CIP 104966 / NBRC 100827 / IM2) protein is Large ribosomal subunit protein eL34 (ribL34e).